Consider the following 323-residue polypeptide: MENYQKIEKIGEGTYGVVYKARELTHPNRIVALKKIRLEAEDEGVPSTAIREISLLKEMNDPNIVRLLNIVHADGHKLYLVFEFLDLDLKKYMEALPVSEGGRGRALPDGSTLSRNLGLGDAMVKKFMAQLIEGIRFCHSHRVLHRDLKPQNLLIDRDGNLKLADFGLARAFGVPLRTYTHEVVTLWYRSPEILLGGRQYSTGVDMWSCGAIFAEMCTRKPLFPGDSEIDEIFKIFRILGTPDETIWPGVTSFPDFKPTFPKWKREDIQNVVPGLEEDGLDLLEALLEYDPARRISAKQACMHPYFQHGSSYYSGRARRNGFH.

The Protein kinase domain maps to 4 to 306; that stretch reads YQKIEKIGEG…AKQACMHPYF (303 aa). ATP contacts are provided by residues 10 to 18 and K34; that span reads IGEGTYGVV. T14 is modified (phosphothreonine). Y15 bears the Phosphotyrosine mark. The active-site Proton acceptor is the D147. T180 carries the post-translational modification Phosphothreonine; by CAK.

Belongs to the protein kinase superfamily. CMGC Ser/Thr protein kinase family. CDC2/CDKX subfamily. In terms of assembly, forms a stable but non-covalent complex with a regulatory subunit (SUC1) and with a cyclin.

It catalyses the reaction L-seryl-[protein] + ATP = O-phospho-L-seryl-[protein] + ADP + H(+). It carries out the reaction L-threonyl-[protein] + ATP = O-phospho-L-threonyl-[protein] + ADP + H(+). With respect to regulation, phosphorylation at Thr-14 or Tyr-15 inactivates the enzyme, while phosphorylation at Thr-180 activates it. Functionally, cyclin-dependent kinase that acts as a master regulator of the mitotic and meiotic cell cycles. This chain is Cyclin-dependent kinase 1, found in Emericella nidulans (strain FGSC A4 / ATCC 38163 / CBS 112.46 / NRRL 194 / M139) (Aspergillus nidulans).